The following is a 373-amino-acid chain: Flagellar P-ring protein (373 aa).

A signal peptide spans 1 to 28 (MPRVSTHLVKLAAAALCALLLSAVAASA).

This sequence belongs to the FlgI family. In terms of assembly, the basal body constitutes a major portion of the flagellar organelle and consists of four rings (L,P,S, and M) mounted on a central rod.

The protein localises to the periplasm. It is found in the bacterial flagellum basal body. Assembles around the rod to form the L-ring and probably protects the motor/basal body from shearing forces during rotation. The protein is Flagellar P-ring protein of Rhodopseudomonas palustris (strain ATCC BAA-98 / CGA009).